The following is a 445-amino-acid chain: RING finger and transmembrane domain-containing protein 2 (445 aa).

At 1–183 (MWLLAAHQVL…LLAKLCFQHK (183 aa)) the chain is on the extracellular side. The interval 12 to 41 (KMQRRHSSNTDNIPPERSRSQALSPEASVD) is disordered. A helical membrane pass occupies residues 184–203 (LGIAVCIGMASTFAYANSTL). Over 204 to 215 (REQVSLKEKRSV) the chain is Cytoplasmic. The chain crosses the membrane as a helical span at residues 216–236 (LVILWILAFLAGNTMYVLYTF). The Extracellular portion of the chain corresponds to 237-256 (SSQQLYSSLIFLKPNLETLD). Residues 257 to 277 (FFDLLWIVGIADFVLKYITIA) traverse the membrane as a helical segment. Over 278–330 (LKCLIVALPKIILAVKSKGKFYLVIEELSQLFRSLVPIQLWYKYIMGDDSSNS) the chain is Cytoplasmic. A helical membrane pass occupies residues 331–351 (YFLGGVLIVLYSLCKSFDICG). Residues 352 to 445 (RVGGLRKALK…GATSAHLQVY (94 aa)) lie on the Extracellular side of the membrane. The RING-type zinc finger occupies 385–423 (CAICQAEFRDPMILLCQHVFCEECLCLWLDRERTCPLCR).

It localises to the membrane. Functionally, E3 ubiquitin-protein ligase that negatively regulates IL3-dependent cellular responses through IL3RA ubiquitination and degradation by the proteasome, having an anti-inflammatory effect. The sequence is that of RING finger and transmembrane domain-containing protein 2 (Rnft2) from Mus musculus (Mouse).